A 425-amino-acid chain; its full sequence is Histidine--tRNA ligase (425 aa).

Belongs to the class-II aminoacyl-tRNA synthetase family. As to quaternary structure, homodimer.

It localises to the cytoplasm. It catalyses the reaction tRNA(His) + L-histidine + ATP = L-histidyl-tRNA(His) + AMP + diphosphate + H(+). This is Histidine--tRNA ligase from Pelotomaculum thermopropionicum (strain DSM 13744 / JCM 10971 / SI).